A 1263-amino-acid chain; its full sequence is TBC1 domain family member 9B (1263 aa).

2 consecutive GRAM domains span residues 142 to 209 (LKMR…EKNA) and 288 to 356 (ECYR…EKAD). Thr397 is modified (phosphothreonine). The segment at 397–449 (TPSKQTGSSIGGTKASVSDPAPESLPTPQEASEPPASPSSPLSSPPSFSTQEI) is disordered. Phosphoserine occurs at positions 412, 433, 436, and 464. Positions 422-447 (PTPQEASEPPASPSSPLSSPPSFSTQ) are enriched in low complexity. Positions 509-696 (GIPESLRGEL…VIVDCFFYEG (188 aa)) constitute a Rab-GAP TBC domain. A helical transmembrane segment spans residues 669 to 689 (LSWFLTLFLSVMPFESAVVIV). The region spanning 880–915 (HTPVLAGRMFRLLDQNKDSLINFKEFVTGMSGMYHG) is the EF-hand domain. 3 disordered regions span residues 977–1002 (EQQE…PDYR), 1075–1126 (TTKK…SGDM), and 1139–1159 (VEGG…DDET). Residues 987-1002 (TPERREEKGTSPPDYR) are compositionally biased toward basic and acidic residues. Residue Ser1254 is modified to Phosphoserine.

It is found in the membrane. Its function is as follows. May act as a GTPase-activating protein for Rab family protein(s). The sequence is that of TBC1 domain family member 9B (Tbc1d9b) from Mus musculus (Mouse).